The primary structure comprises 256 residues: Triosephosphate isomerase (256 aa).

9–11 lines the substrate pocket; sequence NWK. His97 acts as the Electrophile in catalysis. Glu169 (proton acceptor) is an active-site residue. Residues Gly175, Ser214, and 235 to 236 each bind substrate; that span reads GG.

The protein belongs to the triosephosphate isomerase family. As to quaternary structure, homodimer.

It localises to the cytoplasm. It catalyses the reaction D-glyceraldehyde 3-phosphate = dihydroxyacetone phosphate. It functions in the pathway carbohydrate biosynthesis; gluconeogenesis. It participates in carbohydrate degradation; glycolysis; D-glyceraldehyde 3-phosphate from glycerone phosphate: step 1/1. Functionally, involved in the gluconeogenesis. Catalyzes stereospecifically the conversion of dihydroxyacetone phosphate (DHAP) to D-glyceraldehyde-3-phosphate (G3P). This chain is Triosephosphate isomerase, found in Aliivibrio fischeri (strain ATCC 700601 / ES114) (Vibrio fischeri).